A 157-amino-acid polypeptide reads, in one-letter code: MPRRREVPKREILPDPKFGNVELSKFMNVIMEGGKKAIAERIIYGALEQIEKKNPGKDPVEAFTMAINNVKPMVEVKSRRVGGSNYQVPVEVRPVRRLALSMRWIKEAARKRGEKSMALRLANELMEATEGRGGAMKKRDEVHRMAEANKAFSHFRF.

This sequence belongs to the universal ribosomal protein uS7 family. As to quaternary structure, part of the 30S ribosomal subunit. Contacts proteins S9 and S11.

One of the primary rRNA binding proteins, it binds directly to 16S rRNA where it nucleates assembly of the head domain of the 30S subunit. Is located at the subunit interface close to the decoding center, probably blocks exit of the E-site tRNA. The sequence is that of Small ribosomal subunit protein uS7 from Albidiferax ferrireducens (strain ATCC BAA-621 / DSM 15236 / T118) (Rhodoferax ferrireducens).